The primary structure comprises 95 residues: uncharacterized protein (95 aa).

Residues 1 to 19 form the signal peptide; it reads MAILMLSLQLILLLIPSIS. N-linked (GlcNAc...) asparagine glycosylation is found at Asn-38 and Asn-41.

The protein localises to the secreted. This is an uncharacterized protein from Homo sapiens (Human).